We begin with the raw amino-acid sequence, 156 residues long: MLKLASSLRTGLISRSIRTLAPTVNPAEQQQVQAVLPDKLYSSVEIEYRGHDKAVLKSYTSFLQQVCQHLEIPQGRLEVLPYIRWVQPALRSKFVHKKYKLHYETRTHISKLEILNVTGSTASTFLEYIQRNIPEGVGMRVGFTELQPLPLTIQKN.

It belongs to the universal ribosomal protein uS10 family.

The protein localises to the mitochondrion. Its function is as follows. Ribosomal protein required for normal mitochondrial function and normal larval development. Thought to have a role in insulin/IGF signaling. The polypeptide is Small ribosomal subunit protein uS10m (mrps-10) (Caenorhabditis elegans).